The following is a 158-amino-acid chain: Large ribosomal subunit protein eL20z (158 aa).

Belongs to the eukaryotic ribosomal protein eL20 family.

This chain is Large ribosomal subunit protein eL20z (RPL18A1), found in Arabidopsis thaliana (Mouse-ear cress).